Reading from the N-terminus, the 85-residue chain is Exodeoxyribonuclease 7 small subunit (85 aa).

Residues 66–85 (SGEGEEVPLDTPDAEDGDGE) are disordered. Residues 68-85 (EGEEVPLDTPDAEDGDGE) show a composition bias toward acidic residues.

This sequence belongs to the XseB family. In terms of assembly, heterooligomer composed of large and small subunits.

It is found in the cytoplasm. It catalyses the reaction Exonucleolytic cleavage in either 5'- to 3'- or 3'- to 5'-direction to yield nucleoside 5'-phosphates.. Its function is as follows. Bidirectionally degrades single-stranded DNA into large acid-insoluble oligonucleotides, which are then degraded further into small acid-soluble oligonucleotides. In Thioalkalivibrio sulfidiphilus (strain HL-EbGR7), this protein is Exodeoxyribonuclease 7 small subunit.